Here is a 489-residue protein sequence, read N- to C-terminus: UDP-N-acetylmuramate--L-alanine ligase (489 aa).

128–134 (GTHGKTT) is an ATP binding site.

It belongs to the MurCDEF family.

It is found in the cytoplasm. It carries out the reaction UDP-N-acetyl-alpha-D-muramate + L-alanine + ATP = UDP-N-acetyl-alpha-D-muramoyl-L-alanine + ADP + phosphate + H(+). Its pathway is cell wall biogenesis; peptidoglycan biosynthesis. In terms of biological role, cell wall formation. This is UDP-N-acetylmuramate--L-alanine ligase from Shewanella pealeana (strain ATCC 700345 / ANG-SQ1).